The chain runs to 697 residues: Pentatricopeptide repeat-containing protein At2g13600 (697 aa).

16 PPR repeats span residues 18–53, 54–84, 85–115, 116–150, 151–185, 186–216, 217–251, 252–282, 288–322, 324–349, 350–384, 385–419, 426–456, 457–491, 492–527, and 528–558; these read DSSPFAKLLDSCIKSKLSAIYVRYVHASVIKSGFSN, EIFIQNRLIDAYSKCGSLEDGRQVFDKMPQR, NIYTWNSVVTGLTKLGFLDEADSLFRSMPER, DQCTWNSMVSGFAQHDRCEEALCYFAMMHKEGFVL, NEYSFASVLSACSGLNDMNKGVQVHSLIAKSPFLS, DVYIGSALVDMYSKCGNVNDAQRVFDEMGDR, NVVSWNSLITCFEQNGPAVEALDVFQMMLESRVEP, DEVTLASVISACASLSAIKVGQEVHGRVVKN, DIILSNAFVDMYAKCSRIKEARFIFDSMPIRNVIA, TSMISGYAMAASTKAARLMFTKMAER, NVVSWNALIAGYTQNGENEEALSLFCLLKRESVCP, THYSFANILKACADLAELHLGMQAHVHVLKHGFKF, DIFVGNSLIDMYVKCGCVEEGYLVFRKMMER, DCVSWNAMIIGFAQNGYGNEALELFREMLESGEKP, DHITMIGVLSACGHAGFVEEGRHYFSSMTRDFGVAP, and LRDHYTCMVDLLGRAGFLEEAKSMIEEMPMQ. The interval 563–638 is type E motif; that stretch reads IWGSLLAACK…QPGCSWIKIQ (76 aa). A type E(+) motif region spans residues 639–669; sequence GHDHVFMVKDKSHPRKKQIHSLLDILIAEMR.

It belongs to the PPR family. PCMP-E subfamily.

This Arabidopsis thaliana (Mouse-ear cress) protein is Pentatricopeptide repeat-containing protein At2g13600 (PCMP-E76).